Reading from the N-terminus, the 297-residue chain is tRNA uridine(34) hydroxylase (297 aa).

The region spanning 133 to 228 (RGEEVVFFDG…YGETFKDQGL (96 aa)) is the Rhodanese domain. The active-site Cysteine persulfide intermediate is Cys-188.

The protein belongs to the TrhO family.

The enzyme catalyses uridine(34) in tRNA + AH2 + O2 = 5-hydroxyuridine(34) in tRNA + A + H2O. Catalyzes oxygen-dependent 5-hydroxyuridine (ho5U) modification at position 34 in tRNAs. This chain is tRNA uridine(34) hydroxylase, found in Arthrobacter sp. (strain FB24).